The sequence spans 102 residues: Large ribosomal subunit protein bL21 (102 aa).

Belongs to the bacterial ribosomal protein bL21 family. As to quaternary structure, part of the 50S ribosomal subunit. Contacts protein L20.

In terms of biological role, this protein binds to 23S rRNA in the presence of protein L20. This chain is Large ribosomal subunit protein bL21, found in Desulfovibrio desulfuricans (strain ATCC 27774 / DSM 6949 / MB).